A 1099-amino-acid chain; its full sequence is Probable inorganic carbon transporter subunit DabA (1099 aa).

Residues 175–194 form a disordered region; sequence RQGRRRFATTERRTRRTRRS. Residues 176-194 are compositionally biased toward basic residues; the sequence is QGRRRFATTERRTRRTRRS. Cys514, Asp516, His722, and Cys737 together coordinate Zn(2+). The tract at residues 1071–1099 is disordered; it reads AGAGAAQPTRDAIELPEQASGPLPARDGQ.

This sequence belongs to the inorganic carbon transporter (TC 9.A.2) DabA family. Forms a complex with DabB. The cofactor is Zn(2+).

The protein localises to the cell membrane. Its function is as follows. Part of an energy-coupled inorganic carbon pump. The polypeptide is Probable inorganic carbon transporter subunit DabA (Parafrankia sp. (strain EAN1pec)).